The chain runs to 128 residues: Small ribosomal subunit protein uS12 (128 aa).

3-methylthioaspartic acid is present on Asp-89. A disordered region spans residues 101–128 (SLDTSGVADRRNGRSKYGAKRPKEGAKK).

It belongs to the universal ribosomal protein uS12 family. Part of the 30S ribosomal subunit. Contacts proteins S8 and S17. May interact with IF1 in the 30S initiation complex.

In terms of biological role, with S4 and S5 plays an important role in translational accuracy. Its function is as follows. Interacts with and stabilizes bases of the 16S rRNA that are involved in tRNA selection in the A site and with the mRNA backbone. Located at the interface of the 30S and 50S subunits, it traverses the body of the 30S subunit contacting proteins on the other side and probably holding the rRNA structure together. The combined cluster of proteins S8, S12 and S17 appears to hold together the shoulder and platform of the 30S subunit. This chain is Small ribosomal subunit protein uS12, found in Chloroherpeton thalassium (strain ATCC 35110 / GB-78).